The primary structure comprises 449 residues: NADH-quinone oxidoreductase subunit H (449 aa).

The next 9 membrane-spanning stretches (helical) occupy residues 26–46, 96–116, 136–156, 177–197, 211–231, 259–279, 298–318, 330–350, and 365–385; these read FWLI…MTLF, PIFI…FAVI, LPVS…GLIL, IISY…YAGT, WYIA…GETN, FFFL…TTLF, WVPL…FIWL, FMAF…LVIA, and WLIG…LDPG. The segment at 396–449 is disordered; that stretch reads AERRKLAEAPSLESIPWPPPPPGGAHHRPAVPAGTSANGSSTVIPADPPPRQES.

The protein belongs to the complex I subunit 1 family. In terms of assembly, NDH-1 is composed of 14 different subunits. Subunits NuoA, H, J, K, L, M, N constitute the membrane sector of the complex.

It localises to the cell membrane. The catalysed reaction is a quinone + NADH + 5 H(+)(in) = a quinol + NAD(+) + 4 H(+)(out). Its function is as follows. NDH-1 shuttles electrons from NADH, via FMN and iron-sulfur (Fe-S) centers, to quinones in the respiratory chain. The immediate electron acceptor for the enzyme in this species is believed to be ubiquinone. Couples the redox reaction to proton translocation (for every two electrons transferred, four hydrogen ions are translocated across the cytoplasmic membrane), and thus conserves the redox energy in a proton gradient. This subunit may bind ubiquinone. The protein is NADH-quinone oxidoreductase subunit H of Frankia alni (strain DSM 45986 / CECT 9034 / ACN14a).